Consider the following 711-residue polypeptide: Ribosomal RNA large subunit methyltransferase K/L (711 aa).

The 112-residue stretch at 42 to 153 folds into the THUMP domain; that stretch reads DAQRAVLWSR…KGRATISVDL (112 aa).

The protein belongs to the methyltransferase superfamily. RlmKL family.

The protein resides in the cytoplasm. The enzyme catalyses guanosine(2445) in 23S rRNA + S-adenosyl-L-methionine = N(2)-methylguanosine(2445) in 23S rRNA + S-adenosyl-L-homocysteine + H(+). It carries out the reaction guanosine(2069) in 23S rRNA + S-adenosyl-L-methionine = N(2)-methylguanosine(2069) in 23S rRNA + S-adenosyl-L-homocysteine + H(+). In terms of biological role, specifically methylates the guanine in position 2445 (m2G2445) and the guanine in position 2069 (m7G2069) of 23S rRNA. The chain is Ribosomal RNA large subunit methyltransferase K/L from Xanthomonas oryzae pv. oryzae (strain KACC10331 / KXO85).